We begin with the raw amino-acid sequence, 530 residues long: Ubiquitin carboxyl-terminal hydrolase 17-like protein 22 (530 aa).

Residues 80-375 (AGLQNMGNTC…QAYVLFYIQK (296 aa)) enclose the USP domain. Cys-89 acts as the Nucleophile in catalysis. The active-site Proton acceptor is the His-334. 2 stretches are compositionally biased toward basic and acidic residues: residues 382 to 392 (SESVSRGREPR) and 398 to 412 (DTDR…KRDH). 2 disordered regions span residues 382–412 (SESV…KRDH) and 476–530 (KNHH…LVCQ). Low complexity predominate over residues 484–495 (SSLLKLSSTTPT). The segment covering 496 to 505 (HQESMNTGTL) has biased composition (polar residues). Positions 510-524 (GRARRSKGKNKHSKR) are enriched in basic residues.

This sequence belongs to the peptidase C19 family. USP17 subfamily.

It localises to the nucleus. It is found in the endoplasmic reticulum. It carries out the reaction Thiol-dependent hydrolysis of ester, thioester, amide, peptide and isopeptide bonds formed by the C-terminal Gly of ubiquitin (a 76-residue protein attached to proteins as an intracellular targeting signal).. Its function is as follows. Deubiquitinating enzyme that removes conjugated ubiquitin from specific proteins to regulate different cellular processes that may include cell proliferation, progression through the cell cycle, apoptosis, cell migration, and the cellular response to viral infection. The sequence is that of Ubiquitin carboxyl-terminal hydrolase 17-like protein 22 (USP17L22) from Homo sapiens (Human).